A 199-amino-acid polypeptide reads, in one-letter code: Recombination protein RecR (199 aa).

The segment at C57–C72 adopts a C4-type zinc-finger fold. The Toprim domain occupies S80–A176.

The protein belongs to the RecR family.

Its function is as follows. May play a role in DNA repair. It seems to be involved in an RecBC-independent recombinational process of DNA repair. It may act with RecF and RecO. The chain is Recombination protein RecR from Ligilactobacillus salivarius (strain UCC118) (Lactobacillus salivarius).